The chain runs to 291 residues: Pentonolactonase XacC (291 aa).

Residues glutamate 15, asparagine 141, and aspartate 191 each contribute to the a divalent metal cation site. Aspartate 191 acts as the Proton donor/acceptor in catalysis.

It belongs to the SMP-30/CGR1 family. Monomer. The cofactor is a divalent metal cation.

The enzyme catalyses L-arabinono-1,4-lactone + H2O = L-arabinonate + H(+). It carries out the reaction D-xylono-1,4-lactone + H2O = D-xylonate + H(+). Its pathway is carbohydrate degradation. Its function is as follows. Pentonolactonase involved in D-arabinose and D-xylose catabolism. Catalyzes the hydrolysis of both L-arabino-gamma-lactone and D-xylono-gamma-lactone to the corresponding acids. Can also hydrolyze D-galactono-gamma-lactone and D-glucono-delta-lactone. The sequence is that of Pentonolactonase XacC from Haloferax volcanii (strain ATCC 29605 / DSM 3757 / JCM 8879 / NBRC 14742 / NCIMB 2012 / VKM B-1768 / DS2) (Halobacterium volcanii).